Reading from the N-terminus, the 317-residue chain is MSEKTAVLLLQMGGPDSLDAVEPFLVNLFSDRDIIRIGPAFLQPFIARLIAKKRATPVERKYEEIGGKSPIRELTEAQAKALEEVLGDGYCCFTAMRYWKPTTVEALAAIRREGITRIIALSLYPHYSRATTGSSVNELKRVLAQSGATFDVTYVDRFFDHPRYIEALAEKIKEGLDDFHPLAEVQILFSAHSLPQSFIDEGDPYLSHIEETVRLVMERFEGVTYHLAFQSRAGPVKWLEPSTEEILEYLAAHQVKNLLMVPLSFVSDHIETLHEIDIEYAMLAHRLGYAKFRRSPSLNTSPLFIDCLADLVRKAGM.

Fe cation contacts are provided by histidine 192 and glutamate 271.

It belongs to the ferrochelatase family.

The protein resides in the cytoplasm. It carries out the reaction heme b + 2 H(+) = protoporphyrin IX + Fe(2+). The protein operates within porphyrin-containing compound metabolism; protoheme biosynthesis; protoheme from protoporphyrin-IX: step 1/1. Catalyzes the ferrous insertion into protoporphyrin IX. The chain is Ferrochelatase from Geobacter metallireducens (strain ATCC 53774 / DSM 7210 / GS-15).